A 219-amino-acid chain; its full sequence is Thiamine-phosphate synthase (219 aa).

Residues 44 to 48 (QFREK) and Asn-79 each bind 4-amino-2-methyl-5-(diphosphooxymethyl)pyrimidine. Positions 80 and 99 each coordinate Mg(2+). 4-amino-2-methyl-5-(diphosphooxymethyl)pyrimidine is bound at residue Ser-117. 143 to 145 (TST) contributes to the 2-[(2R,5Z)-2-carboxy-4-methylthiazol-5(2H)-ylidene]ethyl phosphate binding site. Lys-146 provides a ligand contact to 4-amino-2-methyl-5-(diphosphooxymethyl)pyrimidine. 2-[(2R,5Z)-2-carboxy-4-methylthiazol-5(2H)-ylidene]ethyl phosphate is bound by residues Gly-175 and 195–196 (IS).

This sequence belongs to the thiamine-phosphate synthase family. The cofactor is Mg(2+).

The enzyme catalyses 2-[(2R,5Z)-2-carboxy-4-methylthiazol-5(2H)-ylidene]ethyl phosphate + 4-amino-2-methyl-5-(diphosphooxymethyl)pyrimidine + 2 H(+) = thiamine phosphate + CO2 + diphosphate. The catalysed reaction is 2-(2-carboxy-4-methylthiazol-5-yl)ethyl phosphate + 4-amino-2-methyl-5-(diphosphooxymethyl)pyrimidine + 2 H(+) = thiamine phosphate + CO2 + diphosphate. It carries out the reaction 4-methyl-5-(2-phosphooxyethyl)-thiazole + 4-amino-2-methyl-5-(diphosphooxymethyl)pyrimidine + H(+) = thiamine phosphate + diphosphate. It participates in cofactor biosynthesis; thiamine diphosphate biosynthesis; thiamine phosphate from 4-amino-2-methyl-5-diphosphomethylpyrimidine and 4-methyl-5-(2-phosphoethyl)-thiazole: step 1/1. Functionally, condenses 4-methyl-5-(beta-hydroxyethyl)thiazole monophosphate (THZ-P) and 2-methyl-4-amino-5-hydroxymethyl pyrimidine pyrophosphate (HMP-PP) to form thiamine monophosphate (TMP). This Bacillus anthracis (strain A0248) protein is Thiamine-phosphate synthase.